Here is a 331-residue protein sequence, read N- to C-terminus: uncharacterized protein (331 aa).

7 consecutive Pentapeptide repeat domains span residues 20-59 (LKLP…NLGQ), 60-99 (ANLV…ILRD), 100-139 (SDMT…NMRQ), 151-190 (AILG…DLRK), 191-230 (ADLS…KISE), 231-270 (AEMT…DLSR), and 271-310 (ANLT…DLMS).

This is an uncharacterized protein from Synechocystis sp. (strain ATCC 27184 / PCC 6803 / Kazusa).